The chain runs to 151 residues: Nucleoside diphosphate kinase (151 aa).

The ATP site is built by K9, F57, R86, T92, R103, and N113. The active-site Pros-phosphohistidine intermediate is H116.

This sequence belongs to the NDK family. Homotetramer. Mg(2+) serves as cofactor.

The protein localises to the cytoplasm. The enzyme catalyses a 2'-deoxyribonucleoside 5'-diphosphate + ATP = a 2'-deoxyribonucleoside 5'-triphosphate + ADP. The catalysed reaction is a ribonucleoside 5'-diphosphate + ATP = a ribonucleoside 5'-triphosphate + ADP. Major role in the synthesis of nucleoside triphosphates other than ATP. The ATP gamma phosphate is transferred to the NDP beta phosphate via a ping-pong mechanism, using a phosphorylated active-site intermediate. The protein is Nucleoside diphosphate kinase of Chloroflexus aurantiacus (strain ATCC 29364 / DSM 637 / Y-400-fl).